The sequence spans 128 residues: Secreted RxLR effector protein 57 (128 aa).

Positions 1 to 31 (MHRKRLRVVLSATLLDLITCVQLMLDPLVRS) are cleaved as a signal peptide. Positions 58 to 61 (RILR) match the RxLR motif.

The protein belongs to the RxLR effector family.

It localises to the secreted. Its subcellular location is the host nucleus. It is found in the host cytoplasm. Its function is as follows. Secreted effector that completely suppresses the host cell death induced by cell death-inducing proteins. The sequence is that of Secreted RxLR effector protein 57 from Plasmopara viticola (Downy mildew of grapevine).